We begin with the raw amino-acid sequence, 86 residues long: Neurotoxin LmNaTx34.1 (86 aa).

A signal peptide spans 1 to 18 (MKTVILVVIALMVIEVQG). Residues 19–85 (DGYLMVRAGI…IWTYEKNTCS (67 aa)) form the LCN-type CS-alpha/beta domain. 4 cysteine pairs are disulfide-bonded: C32–C84, C36–C57, C43–C64, and C47–C66.

The protein belongs to the long (4 C-C) scorpion toxin superfamily. Sodium channel inhibitor family. Beta subfamily. In terms of tissue distribution, expressed by the venom gland.

The protein resides in the secreted. In terms of biological role, binds voltage-independently at site-4 of sodium channels (Nav) and shift the voltage of activation toward more negative potentials thereby affecting sodium channel activation and promoting spontaneous and repetitive firing. This chain is Neurotoxin LmNaTx34.1, found in Lychas mucronatus (Chinese swimming scorpion).